We begin with the raw amino-acid sequence, 301 residues long: Ribosomal RNA small subunit methyltransferase H (301 aa).

S-adenosyl-L-methionine-binding positions include 25 to 27 (GGH), aspartate 45, phenylalanine 72, aspartate 94, and glutamine 101.

Belongs to the methyltransferase superfamily. RsmH family.

The protein resides in the cytoplasm. The catalysed reaction is cytidine(1402) in 16S rRNA + S-adenosyl-L-methionine = N(4)-methylcytidine(1402) in 16S rRNA + S-adenosyl-L-homocysteine + H(+). Specifically methylates the N4 position of cytidine in position 1402 (C1402) of 16S rRNA. This is Ribosomal RNA small subunit methyltransferase H from Methylococcus capsulatus (strain ATCC 33009 / NCIMB 11132 / Bath).